A 355-amino-acid polypeptide reads, in one-letter code: Ataxin-3 (355 aa).

Methionine 1 participates in a covalent cross-link: Peptide (Met-Gly) (interchain with G-Cter in ubiquitin). Residues 1–180 form the Josephin domain; sequence MESIFHEKQE…DCEADQLLQM (180 aa). Catalysis depends on cysteine 14, which acts as the Nucleophile. The active-site Proton acceptor is histidine 119. The active site involves asparagine 134. Lysine 200 is covalently cross-linked (Glycyl lysine isopeptide (Lys-Gly) (interchain with G-Cter in ubiquitin)). 2 consecutive UIM domains span residues 224–243 and 244–263; these read DDED…IDME and DEEA…SSRG. A disordered region spans residues 257–333; sequence MQGSSRGMCE…AGNAMSEEDV (77 aa). Phosphoserine is present on residues serine 268, serine 272, and serine 273. Residues 279–301 show a composition bias toward basic and acidic residues; the sequence is EELRKRREAYFEKQQHQQQEADR. The span at 312–326 shows a compositional bias: polar residues; it reads PTTSSGGLRSNQAGN. Phosphoserine is present on serine 321. Residues 329–348 enclose the UIM 3 domain; sequence SEEDVLRATVTVSLETAKDS.

In terms of assembly, interacts with STUB1/CHIP (when monoubiquitinated). Interacts with DNA repair proteins RAD23A and RAD23B. Interacts with BECN1 (via its poly-Gln domain). Interacts with PRKN, UBR2, VCP and tubulin. Monoubiquitinated by UBE2W, possibly leading to activate the deubiquitinating enzyme activity. In terms of tissue distribution, ubiquitously expressed.

Its subcellular location is the nucleus matrix. It localises to the nucleus. The protein resides in the lysosome membrane. The catalysed reaction is Thiol-dependent hydrolysis of ester, thioester, amide, peptide and isopeptide bonds formed by the C-terminal Gly of ubiquitin (a 76-residue protein attached to proteins as an intracellular targeting signal).. Deubiquitinating enzyme involved in protein homeostasis maintenance, transcription, cytoskeleton regulation, myogenesis and degradation of misfolded chaperone substrates. Binds long polyubiquitin chains and trims them, while it has weak or no activity against chains of 4 or less ubiquitins. Involved in degradation of misfolded chaperone substrates via its interaction with STUB1/CHIP: recruited to monoubiquitinated STUB1/CHIP, and restricts the length of ubiquitin chain attached to STUB1/CHIP substrates and preventing further chain extension. Interacts with key regulators of transcription and represses transcription: acts as a histone-binding protein that regulates transcription. Acts as a negative regulator of mTORC1 signaling in response to amino acid deprivation by mediating deubiquitination of RHEB, thereby promoting RHEB inactivation by the TSC-TBC complex. Regulates autophagy via the deubiquitination of 'Lys-402' of BECN1 leading to the stabilization of BECN1. The protein is Ataxin-3 (Atxn3) of Rattus norvegicus (Rat).